We begin with the raw amino-acid sequence, 441 residues long: MLETSQTIPELVAWTREREFALNLSTERLAFLLAIAIYNNERLDGEMLEADLVDIFRHISTAFEQSNDTIATRANNAINELVKQRFLNRFSSEFTEGLSIYRLTPLGVGISDYYIRQREFSALRLSVQLSIVADEIQRASEAAEEGGDEHHWRRNVFAPLKYSVAEIFDSIDLSQRVMDENQQSIKEEIAELLTKDWQAAIASCEHLLDETSGNLRELQDTLNAAGDKLQAQLLRIQDCVIGQENLAFVEQLITDLQAKLDRIISWGQQAIDLWIGYDRHVHKFIRTAIDMDKNRVFSQRLRHSIHHYFDHPWFLWTAQAERLVDMRDEELTLREEDALGELPEALQYESLADLHEQIVEHMQTLLIAYRERNEPINLSLVLKEQLAHYPLAKHFDVARIIVDQAVRLGLANDDLSGLYPHWEAINDHGAEVQAHKIDEYK.

A leucine-zipper region spans residues 208 to 236 (LDETSGNLRELQDTLNAAGDKLQAQLLRI).

Belongs to the MukF family. In terms of assembly, interacts, and probably forms a ternary complex, with MukE and MukB via its C-terminal region. The complex formation is stimulated by calcium or magnesium. It is required for an interaction between MukE and MukB.

The protein localises to the cytoplasm. It localises to the nucleoid. Its function is as follows. Involved in chromosome condensation, segregation and cell cycle progression. May participate in facilitating chromosome segregation by condensation DNA from both sides of a centrally located replisome during cell division. Not required for mini-F plasmid partitioning. Probably acts via its interaction with MukB and MukE. Overexpression results in anucleate cells. It has a calcium binding activity. This is Chromosome partition protein MukF from Pasteurella multocida (strain Pm70).